The chain runs to 136 residues: Orexigenic neuropeptide QRFP (136 aa).

Positions 1 to 18 (MVRPYPLIYFLFLPLGAC) are cleaved as a signal peptide. A propeptide spanning residues 19–90 (FPLLDRREPT…HAGCRFRFGR (72 aa)) is cleaved from the precursor. The residue at position 91 (Q91) is a Pyrrolidone carboxylic acid. F133 is modified (phenylalanine amide).

The protein belongs to the RFamide neuropeptide family. In terms of assembly, ligand for the G-protein coupled receptor QRFPR/GPR103. Expressed widely in the brain with highest expression levels in the cerebellum, medulla, pituitary, retina, vestibular nucleus, and white matter. Also expressed in the bladder, colon, coronary artery, parathyroid gland, prostate, testis, and thyroid.

It localises to the secreted. Stimulates feeding behavior, metabolic rate and locomotor activity and increases blood pressure. May have orexigenic activity. May promote aldosterone secretion by the adrenal gland. The protein is Orexigenic neuropeptide QRFP of Homo sapiens (Human).